The chain runs to 241 residues: MAAESSLPPGDMEMSLSEHLRELRNRLIIVIAVTLLLMLAIFPFSAGLVDAVLAHAVPSYVKITTYAPMEMFKARLTMCFIGAITVGFPLLVYEAFRFAAPGLYPHEKRFLYLVFPFSLLLFVAGGLVAYFVTLPLFFSIVIGHGLEVAAPALSVGETFSIVTNFVAGLGLVFQVPLIIVLAIKMGLVKRETLVKGRLGVYGLLFGVAMFFSPDPTLFSQLIVLAVLAILFEVSMVLTRFL.

6 helical membrane-spanning segments follow: residues 27–47, 76–96, 122–142, 161–181, 193–213, and 217–237; these read LIIV…FSAG, LTMC…YEAF, FVAG…SIVI, IVTN…IIVL, LVKG…FFSP, and LFSQ…SMVL.

The protein belongs to the TatC family. Forms a complex with TatA.

The protein localises to the cell membrane. Functionally, part of the twin-arginine translocation (Tat) system that transports large folded proteins containing a characteristic twin-arginine motif in their signal peptide across membranes. The chain is Sec-independent protein translocase protein TatC from Methanocella arvoryzae (strain DSM 22066 / NBRC 105507 / MRE50).